Reading from the N-terminus, the 460-residue chain is UDP-N-acetylmuramoylalanine--D-glutamate ligase (460 aa).

122 to 128 (GSNGKST) is a binding site for ATP.

This sequence belongs to the MurCDEF family.

The protein localises to the cytoplasm. The catalysed reaction is UDP-N-acetyl-alpha-D-muramoyl-L-alanine + D-glutamate + ATP = UDP-N-acetyl-alpha-D-muramoyl-L-alanyl-D-glutamate + ADP + phosphate + H(+). Its pathway is cell wall biogenesis; peptidoglycan biosynthesis. Cell wall formation. Catalyzes the addition of glutamate to the nucleotide precursor UDP-N-acetylmuramoyl-L-alanine (UMA). In Jannaschia sp. (strain CCS1), this protein is UDP-N-acetylmuramoylalanine--D-glutamate ligase.